Here is a 261-residue protein sequence, read N- to C-terminus: EKC/KEOPS complex subunit BUD32 (261 aa).

The region spanning 16 to 261 (DVDIAPISQG…LRGRKRSMLG (246 aa)) is the Protein kinase domain. ATP contacts are provided by residues 22–30 (ISQGAEAIV) and lysine 43. Catalysis depends on aspartate 161, which acts as the Proton acceptor. Serine 187 and serine 189 each carry phosphoserine; by autocatalysis.

The protein belongs to the protein kinase superfamily. BUD32 family. As to quaternary structure, component of the EKC/KEOPS complex composed of at least BUD32, CGI121, GON7, KAE1 and PCC1; the whole complex dimerizes.

Its subcellular location is the cytoplasm. The protein resides in the nucleus. The protein localises to the chromosome. It is found in the telomere. The enzyme catalyses L-seryl-[protein] + ATP = O-phospho-L-seryl-[protein] + ADP + H(+). It catalyses the reaction L-threonyl-[protein] + ATP = O-phospho-L-threonyl-[protein] + ADP + H(+). Component of the EKC/KEOPS complex that is required for the formation of a threonylcarbamoyl group on adenosine at position 37 (t(6)A37) in tRNAs that read codons beginning with adenine. The complex is probably involved in the transfer of the threonylcarbamoyl moiety of threonylcarbamoyl-AMP (TC-AMP) to the N6 group of A37. BUD32 has ATPase activity in the context of the EKC/KEOPS complex and likely plays a supporting role to the catalytic subunit KAE1. The EKC/KEOPS complex also promotes both telomere uncapping and telomere elongation. The complex is required for efficient recruitment of transcriptional coactivators. Important for bud site selection. This is EKC/KEOPS complex subunit BUD32 (BUD32) from Saccharomyces cerevisiae (strain ATCC 204508 / S288c) (Baker's yeast).